Here is a 514-residue protein sequence, read N- to C-terminus: Peptide chain release factor 3 (514 aa).

The region spanning 8-268 is the tr-type G domain; it reads KKRRTFAIIS…IFLKFAPEPH (261 aa). GTP is bound by residues 17–24, 85–89, and 139–142; these read SHPDAGKT, DTPGH, and NKLD.

This sequence belongs to the TRAFAC class translation factor GTPase superfamily. Classic translation factor GTPase family. PrfC subfamily.

The protein localises to the cytoplasm. Functionally, increases the formation of ribosomal termination complexes and stimulates activities of RF-1 and RF-2. It binds guanine nucleotides and has strong preference for UGA stop codons. It may interact directly with the ribosome. The stimulation of RF-1 and RF-2 is significantly reduced by GTP and GDP, but not by GMP. The protein is Peptide chain release factor 3 of Streptococcus pneumoniae serotype 2 (strain D39 / NCTC 7466).